Consider the following 56-residue polypeptide: Lantibiotic subtilin (56 aa).

The propeptide occupies Met1–Gln24. Trp25 is modified (N2-succinyltryptophan; partial). Residues Ser27–Cys31 constitute a cross-link (lanthionine (Ser-Cys)). The residue at position 29 (Ser29) is a 2,3-didehydroalanine (Ser). 4 consecutive cross-links (beta-methyllanthionine (Thr-Cys)) follow at residues Thr32–Cys35, Thr37–Cys43, Thr47–Cys50, and Thr49–Cys52. Thr42 bears the (Z)-2,3-didehydrobutyrine mark. Ser55 carries the post-translational modification 2,3-didehydroalanine (Ser).

The protein belongs to the type A lantibiotic family. In terms of processing, maturation of lantibiotics involves the enzymatic conversion of Thr, and Ser into dehydrated AA and the formation of thioether bonds with cysteine. This is followed by membrane translocation and cleavage of the modified precursor. Post-translationally, succinylated subtilin is 10-20 times less active than subtilin. The ratio subtilin/succinylated subtilin is about 1:2 after 24 hours growth. The 2,3-didehydrobutyrine is determined to be the Z-isomer.

Its function is as follows. Lanthionine-containing peptide antibiotic (lantibiotic) active on Gram-positive bacteria. The bactericidal activity of lantibiotics is based on depolarization of energized bacterial cytoplasmic membranes, initiated by the formation of aqueous transmembrane pores. The chain is Lantibiotic subtilin (spaS) from Bacillus subtilis.